The following is a 262-amino-acid chain: Small ribosomal subunit protein uS2 (262 aa).

A disordered region spans residues 223–262 (KSLLEQDGGEQAAGEEVSQDEKDAVVAEAMSEEDFGEDEE). The segment covering 227–238 (EQDGGEQAAGEE) has biased composition (low complexity). Acidic residues predominate over residues 252–262 (MSEEDFGEDEE).

It belongs to the universal ribosomal protein uS2 family.

The polypeptide is Small ribosomal subunit protein uS2 (Campylobacter concisus (strain 13826)).